The sequence spans 329 residues: Acetyl-coenzyme A carboxylase carboxyl transferase subunit alpha (329 aa).

Residues 40-294 (QLETLAARRR…REALERNLSE (255 aa)) form the CoA carboxyltransferase C-terminal domain.

This sequence belongs to the AccA family. Acetyl-CoA carboxylase is a heterohexamer composed of biotin carboxyl carrier protein (AccB), biotin carboxylase (AccC) and two subunits each of ACCase subunit alpha (AccA) and ACCase subunit beta (AccD).

The protein resides in the cytoplasm. The enzyme catalyses N(6)-carboxybiotinyl-L-lysyl-[protein] + acetyl-CoA = N(6)-biotinyl-L-lysyl-[protein] + malonyl-CoA. Its pathway is lipid metabolism; malonyl-CoA biosynthesis; malonyl-CoA from acetyl-CoA: step 1/1. In terms of biological role, component of the acetyl coenzyme A carboxylase (ACC) complex. First, biotin carboxylase catalyzes the carboxylation of biotin on its carrier protein (BCCP) and then the CO(2) group is transferred by the carboxyltransferase to acetyl-CoA to form malonyl-CoA. The polypeptide is Acetyl-coenzyme A carboxylase carboxyl transferase subunit alpha (Synechococcus sp. (strain CC9311)).